The sequence spans 253 residues: 5'-nucleotidase SurE (253 aa).

Positions 8, 9, 39, and 92 each coordinate a divalent metal cation.

This sequence belongs to the SurE nucleotidase family. Requires a divalent metal cation as cofactor.

It localises to the cytoplasm. It carries out the reaction a ribonucleoside 5'-phosphate + H2O = a ribonucleoside + phosphate. In terms of biological role, nucleotidase that shows phosphatase activity on nucleoside 5'-monophosphates. The polypeptide is 5'-nucleotidase SurE (Burkholderia pseudomallei (strain 1710b)).